The chain runs to 573 residues: Globulin-1 S allele (573 aa).

A signal peptide (or 21) is located at residues 1–18; the sequence is MVSARIVVLLAVLLCAAA. A propeptide spanning residues 19–86 is cleaved from the precursor; sequence AVASSWEDDN…DRSGEGSSED (68 aa). The tract at residues 65–102 is disordered; the sequence is EKRQERSRHEADDRSGEGSSEDEREREQEKEEKQKDRR. Cupin type-1 domains are found at residues 104-262 and 311-493; these read YVFD…DRLE and YSLL…EEVD. Residues 288–315 are disordered; sequence RHASEGGHGPHWPLPPFGESRGPYSLLD. An N-linked (GlcNAc...) asparagine glycan is attached at N349. Disordered regions lie at residues 382-416 and 498-573; these read PHRQSQGGESERERGKGRRSEEEEESSEEQEEVGQ and SRRE…TARM. Residues 390-402 show a composition bias toward basic and acidic residues; that stretch reads ESERERGKGRRSE. A compositionally biased stretch (acidic residues) spans 403–413; the sequence is EEEESSEEQEE. 2 stretches are compositionally biased toward basic and acidic residues: residues 525-542 and 549-561; these read EERHGGRGERERHGREER and REGRHGRGRREEV.

It belongs to the 7S seed storage protein family. In terms of processing, three protein-processing steps occur in the formation of the mature protein from the primary translation product.

This chain is Globulin-1 S allele (GLB1), found in Zea mays (Maize).